Reading from the N-terminus, the 109-residue chain is Resistin (109 aa).

Residues 1–18 form the signal peptide; the sequence is MKALSFLFIPVLGLLVCG. Cystine bridges form between cysteine 51/cysteine 104, cysteine 63/cysteine 103, cysteine 72/cysteine 89, cysteine 74/cysteine 91, and cysteine 78/cysteine 93.

It belongs to the resistin/FIZZ family. As to quaternary structure, homodimer; disulfide-linked.

The protein resides in the secreted. Hormone that seems to suppress insulin ability to stimulate glucose uptake into adipose cells. Potentially links obesity to diabetes. In Bos taurus (Bovine), this protein is Resistin (RETN).